The chain runs to 208 residues: MSSKKRSASSRRWLQEHFNDKYVIEAQKKKLRSRAWFKLDEIDNTDKIFKRGMFVLDLGAAPGGWSQYVVNKVGLKGKVIALDLLPMDSILGVEFLQGDFREKSILKRLLNCIGDKKIDVVISDMAPNMTGISSVDIPKSMHLAELAFDISRDILIPGGSFLVKVFQGEGFEQYLREMRSLFKKVKVRKPDASRIRSREVYIVATGLK.

Residues Gly63, Trp65, Asp83, Asp99, and Asp124 each contribute to the S-adenosyl-L-methionine site. Lys164 (proton acceptor) is an active-site residue.

Belongs to the class I-like SAM-binding methyltransferase superfamily. RNA methyltransferase RlmE family.

It is found in the cytoplasm. The catalysed reaction is uridine(2552) in 23S rRNA + S-adenosyl-L-methionine = 2'-O-methyluridine(2552) in 23S rRNA + S-adenosyl-L-homocysteine + H(+). Specifically methylates the uridine in position 2552 of 23S rRNA at the 2'-O position of the ribose in the fully assembled 50S ribosomal subunit. In Hamiltonella defensa subsp. Acyrthosiphon pisum (strain 5AT), this protein is Ribosomal RNA large subunit methyltransferase E.